The primary structure comprises 475 residues: Chromosomal replication initiator protein DnaA (475 aa).

The tract at residues 1-73 is domain I, interacts with DnaA modulators; that stretch reads MTNSEQERWS…LSCWQAEMPE (73 aa). The domain II stretch occupies residues 73–131; sequence EVHRIDLSVRTAMRCATPAKEAPVAVEARRAERGDAKPADTRAPVMTPVAASHDALGGS. Positions 132–354 are domain III, AAA+ region; sequence PLDPRLTFAS…GAINRLLAHS (223 aa). Residues Gly179, Gly181, Lys182, and Thr183 each coordinate ATP. The tract at residues 355 to 475 is domain IV, binds dsDNA; it reads KLNNQPVTLD…VEALKRQLQD (121 aa).

Belongs to the DnaA family. Oligomerizes as a right-handed, spiral filament on DNA at oriC.

Its subcellular location is the cytoplasm. Functionally, plays an essential role in the initiation and regulation of chromosomal replication. ATP-DnaA binds to the origin of replication (oriC) to initiate formation of the DNA replication initiation complex once per cell cycle. Binds the DnaA box (a 9 base pair repeat at the origin) and separates the double-stranded (ds)DNA. Forms a right-handed helical filament on oriC DNA; dsDNA binds to the exterior of the filament while single-stranded (ss)DNA is stabiized in the filament's interior. The ATP-DnaA-oriC complex binds and stabilizes one strand of the AT-rich DNA unwinding element (DUE), permitting loading of DNA polymerase. After initiation quickly degrades to an ADP-DnaA complex that is not apt for DNA replication. Binds acidic phospholipids. The sequence is that of Chromosomal replication initiator protein DnaA from Bradyrhizobium sp. (strain BTAi1 / ATCC BAA-1182).